We begin with the raw amino-acid sequence, 428 residues long: Adenylosuccinate synthetase (428 aa).

GTP contacts are provided by residues 11–17 and 39–41; these read GDEGKGK and GHT. The active-site Proton acceptor is the Asp-12. 2 residues coordinate Mg(2+): Asp-12 and Gly-39. IMP contacts are provided by residues 12-15, 37-40, Thr-130, Arg-144, Asn-226, Thr-241, and Arg-305; these read DEGK and NAGH. His-40 serves as the catalytic Proton donor. Residue 301–307 coordinates substrate; sequence VTTGRKR. Residues Arg-307, 333–335, and 415–417 each bind GTP; these read KLD and GTG.

It belongs to the adenylosuccinate synthetase family. Homodimer. Mg(2+) serves as cofactor.

It is found in the cytoplasm. It carries out the reaction IMP + L-aspartate + GTP = N(6)-(1,2-dicarboxyethyl)-AMP + GDP + phosphate + 2 H(+). It participates in purine metabolism; AMP biosynthesis via de novo pathway; AMP from IMP: step 1/2. Its function is as follows. Plays an important role in the de novo pathway and in the salvage pathway of purine nucleotide biosynthesis. Catalyzes the first committed step in the biosynthesis of AMP from IMP. This chain is Adenylosuccinate synthetase, found in Candida albicans (strain SC5314 / ATCC MYA-2876) (Yeast).